The chain runs to 189 residues: Elongation factor P (189 aa).

Belongs to the elongation factor P family.

Its subcellular location is the cytoplasm. The protein operates within protein biosynthesis; polypeptide chain elongation. In terms of biological role, involved in peptide bond synthesis. Stimulates efficient translation and peptide-bond synthesis on native or reconstituted 70S ribosomes in vitro. Probably functions indirectly by altering the affinity of the ribosome for aminoacyl-tRNA, thus increasing their reactivity as acceptors for peptidyl transferase. This chain is Elongation factor P, found in Rhizobium meliloti (strain 1021) (Ensifer meliloti).